The following is a 468-amino-acid chain: Glutamate--tRNA ligase (468 aa).

A 'HIGH' region motif is present at residues 12-22; that stretch reads PSPTGFIHLGN. A 'KMSKS' region motif is present at residues 244–248; sequence KMSKR. Lysine 247 lines the ATP pocket.

The protein belongs to the class-I aminoacyl-tRNA synthetase family. Glutamate--tRNA ligase type 1 subfamily. In terms of assembly, monomer.

It is found in the cytoplasm. It catalyses the reaction tRNA(Glu) + L-glutamate + ATP = L-glutamyl-tRNA(Glu) + AMP + diphosphate. Functionally, catalyzes the attachment of glutamate to tRNA(Glu) in a two-step reaction: glutamate is first activated by ATP to form Glu-AMP and then transferred to the acceptor end of tRNA(Glu). The protein is Glutamate--tRNA ligase of Polynucleobacter asymbioticus (strain DSM 18221 / CIP 109841 / QLW-P1DMWA-1) (Polynucleobacter necessarius subsp. asymbioticus).